Consider the following 396-residue polypeptide: uncharacterized protein (396 aa).

The next 2 membrane-spanning stretches (helical) occupy residues 27 to 47 (LLIACLFISGSLSIVVFQICL) and 69 to 89 (FIVLLCMILNMVAPSSLNVTF). An HXXXXD motif motif is present at residues 117 to 122 (HQMYAD). The next 2 helical transmembrane spans lie at 123–143 (WIYLWWLSFVSNLGGNVYIIL) and 372–392 (LTPRILSYYGFFAFLILVFVM).

The protein belongs to the 1-acyl-sn-glycerol-3-phosphate acyltransferase family.

The protein localises to the membrane. This is an uncharacterized protein from Saccharomyces cerevisiae (strain ATCC 204508 / S288c) (Baker's yeast).